Consider the following 61-residue polypeptide: Short neurotoxin 1 (61 aa).

Positions 1-16 are enriched in polar residues; the sequence is MECHNQQSSQPPTTKT. The interval 1 to 20 is disordered; sequence MECHNQQSSQPPTTKTCPGE. 4 disulfide bridges follow: C3–C23, C17–C40, C42–C53, and C54–C59.

The protein belongs to the three-finger toxin family. Short-chain subfamily. Type I alpha-neurotoxin sub-subfamily. Expressed by the venom gland.

The protein localises to the secreted. Its function is as follows. Binds to muscle nicotinic acetylcholine receptor (nAChR) and inhibit acetylcholine from binding to the receptor, thereby impairing neuromuscular transmission. The chain is Short neurotoxin 1 from Naja melanoleuca (Forest cobra).